The primary structure comprises 896 residues: Desmocollin-3 (896 aa).

The first 26 residues, Met1–Phe26, serve as a signal peptide directing secretion. Positions Ala27–Arg134 are excised as a propeptide. 5 consecutive Cadherin domains span residues Arg135–Phe242, Thr243–Phe354, Arg355–Cys471, Ser472–Gln579, and Asp580–Lys690. Over Arg135–Lys690 the chain is Extracellular. An N-linked (GlcNAc...) asparagine glycan is attached at Asn165. N-linked (GlcNAc...) asparagine glycosylation is found at Asn391, Asn546, and Asn629. Residues Trp691–Val711 form a helical membrane-spanning segment. The Cytoplasmic segment spans residues Cys712–Arg896.

In terms of assembly, may form homodimers. Interacts with DSG1; there is evidence to suggest that the interaction promotes cell-cell adhesion of keratinocytes. Expressed in stratified epithelia only, such as the epidermis, tongue, esophagus and rumen (at protein level).

It is found in the cell membrane. Its subcellular location is the cell junction. It localises to the desmosome. The protein resides in the cytoplasm. Its function is as follows. A component of desmosome cell-cell junctions which are required for positive regulation of cellular adhesion. Required for cell-cell adhesion in the epidermis, as a result required for the maintenance of the dermal cohesion and the dermal barrier function. Required for cell-cell adhesion of epithelial cell layers surrounding the telogen hair club, as a result plays an important role in telogen hair shaft anchorage. Essential for successful completion of embryo compaction and embryo development. The protein is Desmocollin-3 (DSC3) of Bos taurus (Bovine).